Consider the following 542-residue polypeptide: CTP synthase (542 aa).

Positions 1–269 (MQTKYIFITG…DALICELLHL (269 aa)) are amidoligase domain. A CTP-binding site is contributed by S14. S14 lines the UTP pocket. Residues 15–20 (SLGKGL) and D72 each bind ATP. Mg(2+) contacts are provided by D72 and E143. CTP-binding positions include 150–152 (DIE), 189–194 (KTKPSQ), and K225. UTP is bound by residues 189-194 (KTKPSQ) and K225. Residue 241 to 243 (KDV) participates in ATP binding. Residues 301–538 (YVQHQDAYKS…IQAMIIYHKS (238 aa)) form the Glutamine amidotransferase type-1 domain. An L-glutamine-binding site is contributed by G358. The active-site Nucleophile; for glutamine hydrolysis is C385. L-glutamine-binding positions include 386–389 (LGMQ), E409, and R466. Catalysis depends on residues H511 and E513.

Belongs to the CTP synthase family. In terms of assembly, homotetramer.

It carries out the reaction UTP + L-glutamine + ATP + H2O = CTP + L-glutamate + ADP + phosphate + 2 H(+). It catalyses the reaction L-glutamine + H2O = L-glutamate + NH4(+). The catalysed reaction is UTP + NH4(+) + ATP = CTP + ADP + phosphate + 2 H(+). Its pathway is pyrimidine metabolism; CTP biosynthesis via de novo pathway; CTP from UDP: step 2/2. Its activity is regulated as follows. Allosterically activated by GTP, when glutamine is the substrate; GTP has no effect on the reaction when ammonia is the substrate. The allosteric effector GTP functions by stabilizing the protein conformation that binds the tetrahedral intermediate(s) formed during glutamine hydrolysis. Inhibited by the product CTP, via allosteric rather than competitive inhibition. Catalyzes the ATP-dependent amination of UTP to CTP with either L-glutamine or ammonia as the source of nitrogen. Regulates intracellular CTP levels through interactions with the four ribonucleotide triphosphates. The protein is CTP synthase of Protochlamydia amoebophila (strain UWE25).